We begin with the raw amino-acid sequence, 1292 residues long: Kinesin-like protein KIN-12A (1292 aa).

Residues 1 to 86 (MKKHFTLPRN…LSAETATESG (86 aa)) form a disordered region. The segment covering 19-29 (PHSPNPSISKS) has biased composition (low complexity). The segment covering 62–71 (PLPPRPPPSN) has biased composition (pro residues). Residues 91–426 (GVKVIVRMKP…LRFAQRAKAI (336 aa)) form the Kinesin motor domain. Position 165–172 (165–172 (GQTGSGKT)) interacts with ATP. 3 microtubules-binding regions span residues 293 to 297 (SSRSH), 326 to 332 (VDLAGSE), and 375 to 379 (HIPYR). The interval 424–461 (KAIQNKAVVNEVMQDDVNFLRGVIHQLRDELQRMKNDG) is neck. Residues 677 to 724 (SVSPTIRNSRKSLKTSELSTASQKDSEGENLVTEAADPSPATSKKMNN) form a disordered region. 2 coiled-coil regions span residues 945–992 (EVLK…CYID) and 1047–1232 (SEEL…NQLV).

The protein belongs to the TRAFAC class myosin-kinesin ATPase superfamily. Kinesin family. KIN-12 subfamily. As to quaternary structure, homodimer and heterodimer with KIN12B. Interacts with TIO.

It localises to the cytoplasm. The protein resides in the cytoskeleton. It is found in the phragmoplast. Plus-end directed kinesin-like motor enzyme that plays a critical role in the organization of phragmoplast microtubules during cytokinesis. Constitutes a signaling module in association with serine/threonine-protein kinase TIO that is required to support phragmoplast expansion and cell-plate growth in plant cells. Binds microtubules in an ATP-sensitive manner. The protein is Kinesin-like protein KIN-12A of Arabidopsis thaliana (Mouse-ear cress).